The sequence spans 90 residues: Acyl-CoA-binding protein (90 aa).

Over residues 1–16 (MGLKEDFEEHAEKAKT) the composition is skewed to basic and acidic residues. Residues 1 to 20 (MGLKEDFEEHAEKAKTLPEN) form a disordered region. The ACB domain occupies 3–88 (LKEDFEEHAE…VKQLLGEAAA (86 aa)). An acyl-CoA contacts are provided by residues 30-34 (YGLYK), Lys-56, and Tyr-75.

The protein belongs to the ACBP family.

In terms of biological role, binds medium- and long-chain acyl-CoA esters with very high affinity and may function as an intracellular carrier of acyl-CoA esters. The chain is Acyl-CoA-binding protein from Ricinus communis (Castor bean).